We begin with the raw amino-acid sequence, 548 residues long: uncharacterized protein (548 aa).

One can recognise a DhaL domain in the interval 8–200 (KLFADMIIQG…LLCVYEGFLK (193 aa)).

This is an uncharacterized protein from Staphylococcus aureus (strain NCTC 8325 / PS 47).